Consider the following 164-residue polypeptide: Large ribosomal subunit protein eL21x/eL21w (164 aa).

It belongs to the eukaryotic ribosomal protein eL21 family.

The chain is Large ribosomal subunit protein eL21x/eL21w (RPL21E) from Arabidopsis thaliana (Mouse-ear cress).